Consider the following 124-residue polypeptide: Small ribosomal subunit protein uS12 (124 aa).

The residue at position 89 (Asp89) is a 3-methylthioaspartic acid.

The protein belongs to the universal ribosomal protein uS12 family. In terms of assembly, part of the 30S ribosomal subunit. Contacts proteins S8 and S17. May interact with IF1 in the 30S initiation complex.

In terms of biological role, with S4 and S5 plays an important role in translational accuracy. Interacts with and stabilizes bases of the 16S rRNA that are involved in tRNA selection in the A site and with the mRNA backbone. Located at the interface of the 30S and 50S subunits, it traverses the body of the 30S subunit contacting proteins on the other side and probably holding the rRNA structure together. The combined cluster of proteins S8, S12 and S17 appears to hold together the shoulder and platform of the 30S subunit. The sequence is that of Small ribosomal subunit protein uS12 from Baumannia cicadellinicola subsp. Homalodisca coagulata.